The chain runs to 1254 residues: SUN domain-containing ossification factor (1254 aa).

The first 29 residues, 1–29, serve as a signal peptide directing secretion; it reads MKKHRRALALVSCLFLCSLVWLPSWRVCC. Disordered stretches follow at residues 58–88, 118–270, and 282–304; these read KKDEREGPINAESLGKSGSNLPISPKEHKLK, EESS…DIPT, and EKEKSQSMHASSNGGSHATKKVQ. Over residues 130–145 the composition is skewed to low complexity; it reads VENISSSSTSEITPIS. The segment covering 165 to 175 has biased composition (acidic residues); sequence EQSETDCDVGE. Residues Asn202 and Asn236 are each glycosylated (N-linked (GlcNAc...) asparagine). The span at 241–253 shows a compositional bias: basic and acidic residues; it reads LKNESSDYTKPGD. Positions 284 to 453 constitute an SUN domain; sequence EKSQSMHASS…SLIRVFGTSM (170 aa). Positions 288-297 are enriched in polar residues; it reads SMHASSNGGS. The N-linked (GlcNAc...) asparagine glycan is linked to Asn524. Disordered regions lie at residues 530–553, 583–605, and 759–788; these read NATATAAPKMPESTPVSTPVPSPE, EEEEEASPSTVTLLGSGEQEDES, and HIPSPVIPQESSVEIDNETEQKSESFSSIE. Over residues 540–553 the composition is skewed to low complexity; it reads PESTPVSTPVPSPE. A coiled-coil region spans residues 909–1009; it reads NQKESVFMRL…VAELKREVSD (101 aa). N-linked (GlcNAc...) asparagine glycosylation is found at Asn928 and Asn955. A helical transmembrane segment spans residues 1011–1031; the sequence is QSYLVISLVLCVVLGLMLCMQ. Ser1081 is modified (phosphoserine). Residues 1152-1172 form a disordered region; the sequence is EVYHSSYKGPPSEGSSETSSQ. Low complexity predominate over residues 1163–1172; the sequence is SEGSSETSSQ.

Post-translationally, O-glycosylated. O-mannosylated by POMT1 and POMT2 and elongated by POMGNT1. In terms of processing, N-glycosylated. Highly expressed in pancreas and testis and to a lower extent in prostate, ovary, heart, thymus, small intestine and spleen.

It is found in the rough endoplasmic reticulum membrane. In terms of biological role, required for bone modeling during late embryogenesis. Regulates type I collagen synthesis in osteoblasts during their postnatal maturation. The chain is SUN domain-containing ossification factor (SUCO) from Homo sapiens (Human).